A 227-amino-acid chain; its full sequence is Cytochrome c oxidase subunit 2 (227 aa).

The Mitochondrial intermembrane segment spans residues Met1–Ser14. A helical transmembrane segment spans residues Pro15–Met45. At Leu46–Gln59 the chain is on the mitochondrial matrix side. Residues Glu60–Met87 traverse the membrane as a helical segment. Residues Asp88 to Val227 are Mitochondrial intermembrane-facing. The Cu cation site is built by His161, Cys196, Glu198, Cys200, His204, and Met207. Glu198 serves as a coordination point for Mg(2+).

The protein belongs to the cytochrome c oxidase subunit 2 family. Component of the cytochrome c oxidase (complex IV, CIV), a multisubunit enzyme composed of 14 subunits. The complex is composed of a catalytic core of 3 subunits MT-CO1, MT-CO2 and MT-CO3, encoded in the mitochondrial DNA, and 11 supernumerary subunits COX4I, COX5A, COX5B, COX6A, COX6B, COX6C, COX7A, COX7B, COX7C, COX8 and NDUFA4, which are encoded in the nuclear genome. The complex exists as a monomer or a dimer and forms supercomplexes (SCs) in the inner mitochondrial membrane with NADH-ubiquinone oxidoreductase (complex I, CI) and ubiquinol-cytochrome c oxidoreductase (cytochrome b-c1 complex, complex III, CIII), resulting in different assemblies (supercomplex SCI(1)III(2)IV(1) and megacomplex MCI(2)III(2)IV(2)). Found in a complex with TMEM177, COA6, COX18, COX20, SCO1 and SCO2. Interacts with TMEM177 in a COX20-dependent manner. Interacts with COX20. Interacts with COX16. The cofactor is Cu cation.

The protein localises to the mitochondrion inner membrane. The catalysed reaction is 4 Fe(II)-[cytochrome c] + O2 + 8 H(+)(in) = 4 Fe(III)-[cytochrome c] + 2 H2O + 4 H(+)(out). Its function is as follows. Component of the cytochrome c oxidase, the last enzyme in the mitochondrial electron transport chain which drives oxidative phosphorylation. The respiratory chain contains 3 multisubunit complexes succinate dehydrogenase (complex II, CII), ubiquinol-cytochrome c oxidoreductase (cytochrome b-c1 complex, complex III, CIII) and cytochrome c oxidase (complex IV, CIV), that cooperate to transfer electrons derived from NADH and succinate to molecular oxygen, creating an electrochemical gradient over the inner membrane that drives transmembrane transport and the ATP synthase. Cytochrome c oxidase is the component of the respiratory chain that catalyzes the reduction of oxygen to water. Electrons originating from reduced cytochrome c in the intermembrane space (IMS) are transferred via the dinuclear copper A center (CU(A)) of subunit 2 and heme A of subunit 1 to the active site in subunit 1, a binuclear center (BNC) formed by heme A3 and copper B (CU(B)). The BNC reduces molecular oxygen to 2 water molecules using 4 electrons from cytochrome c in the IMS and 4 protons from the mitochondrial matrix. This is Cytochrome c oxidase subunit 2 (MT-CO2) from Uromys caudimaculatus (Giant white-tailed rat).